We begin with the raw amino-acid sequence, 455 residues long: MTOR-associated protein MEAK7 (455 aa).

Gly-2 is lipidated: N-myristoyl glycine. A TLDc domain is found at 242–410 (SILDVLSVIY…FDKMEVWGLG (169 aa)). The tract at residues 435–455 (LEISGRARHSEGLREVPRDED) is disordered. Over residues 442–455 (RHSEGLREVPRDED) the composition is skewed to basic and acidic residues.

As to quaternary structure, interacts (via C-terminal domain) with MTOR and MLST8; the interaction with MTOR increases upon nutrient stimulation.

It is found in the membrane. The protein localises to the cytoplasm. Its subcellular location is the lysosome. Its function is as follows. Activates an alternative mTOR signaling through RPS6KB2 activation and EIF4EBP1 repression to regulate cell proliferation and migration. Recruits MTOR at the lysosome, essential for MTOR signaling at the lysosome. This chain is MTOR-associated protein MEAK7 (Meak7), found in Mus musculus (Mouse).